A 485-amino-acid polypeptide reads, in one-letter code: ATP-dependent 6-phosphofructokinase (485 aa).

ATP is bound by residues Gly105, 171-172 (RG), and 196-199 (GDGT). Asp197 serves as a coordination point for Mg(2+). Substrate-binding positions include 225–227 (TID), 270–272 (MGR), Glu323, and 378–381 (YMIR). The active-site Proton acceptor is Asp227. A Peroxisomal targeting signal motif is present at residues 483 to 485 (SKL).

This sequence belongs to the phosphofructokinase type A (PFKA) family. PPi-dependent PFK group II subfamily. Atypical ATP-dependent clade 'X' sub-subfamily. In terms of assembly, homotetramer. Requires Mg(2+) as cofactor.

It is found in the glycosome. The enzyme catalyses beta-D-fructose 6-phosphate + ATP = beta-D-fructose 1,6-bisphosphate + ADP + H(+). It functions in the pathway carbohydrate degradation; glycolysis; D-glyceraldehyde 3-phosphate and glycerone phosphate from D-glucose: step 3/4. Its activity is regulated as follows. Allosterically activated by AMP. In terms of biological role, catalyzes the phosphorylation of D-fructose 6-phosphate to fructose 1,6-bisphosphate by ATP, the first committing step of glycolysis. This chain is ATP-dependent 6-phosphofructokinase, found in Trypanosoma cruzi (strain CL Brener).